A 45-amino-acid chain; its full sequence is Large ribosomal subunit protein bL34 (45 aa).

Residues 23 to 45 (ETPGGKKVLSARRAKGRKNLIAK) are disordered. Basic residues predominate over residues 31–45 (LSARRAKGRKNLIAK).

This sequence belongs to the bacterial ribosomal protein bL34 family.

The sequence is that of Large ribosomal subunit protein bL34 from Elusimicrobium minutum (strain Pei191).